The chain runs to 104 residues: Small ribosomal subunit protein uS10 (104 aa).

Belongs to the universal ribosomal protein uS10 family. Part of the 30S ribosomal subunit.

Functionally, involved in the binding of tRNA to the ribosomes. This Hydrogenobaculum sp. (strain Y04AAS1) protein is Small ribosomal subunit protein uS10.